A 161-amino-acid polypeptide reads, in one-letter code: Putative 4-hydroxy-4-methyl-2-oxoglutarate aldolase (161 aa).

Substrate contacts are provided by residues 75-78 (GDML) and arginine 97. A divalent metal cation is bound at residue aspartate 98.

This sequence belongs to the class II aldolase/RraA-like family. In terms of assembly, homotrimer. A divalent metal cation serves as cofactor.

It carries out the reaction 4-hydroxy-4-methyl-2-oxoglutarate = 2 pyruvate. The enzyme catalyses oxaloacetate + H(+) = pyruvate + CO2. In terms of biological role, catalyzes the aldol cleavage of 4-hydroxy-4-methyl-2-oxoglutarate (HMG) into 2 molecules of pyruvate. Also contains a secondary oxaloacetate (OAA) decarboxylase activity due to the common pyruvate enolate transition state formed following C-C bond cleavage in the retro-aldol and decarboxylation reactions. The polypeptide is Putative 4-hydroxy-4-methyl-2-oxoglutarate aldolase (Marinomonas sp. (strain MWYL1)).